A 388-amino-acid chain; its full sequence is Succinate--CoA ligase [ADP-forming] subunit beta (388 aa).

The ATP-grasp domain occupies 9-244; that stretch reads KQLFAEYGLP…PSQDDPREAH (236 aa). ATP-binding positions include Lys-46, 53–55, Glu-99, Thr-102, and Glu-107; that span reads GRG. The Mg(2+) site is built by Asn-199 and Asp-213. Substrate is bound by residues Asn-264 and 321–323; that span reads GIV.

It belongs to the succinate/malate CoA ligase beta subunit family. As to quaternary structure, heterotetramer of two alpha and two beta subunits. It depends on Mg(2+) as a cofactor.

The enzyme catalyses succinate + ATP + CoA = succinyl-CoA + ADP + phosphate. It catalyses the reaction GTP + succinate + CoA = succinyl-CoA + GDP + phosphate. It participates in carbohydrate metabolism; tricarboxylic acid cycle; succinate from succinyl-CoA (ligase route): step 1/1. Functionally, succinyl-CoA synthetase functions in the citric acid cycle (TCA), coupling the hydrolysis of succinyl-CoA to the synthesis of either ATP or GTP and thus represents the only step of substrate-level phosphorylation in the TCA. The beta subunit provides nucleotide specificity of the enzyme and binds the substrate succinate, while the binding sites for coenzyme A and phosphate are found in the alpha subunit. This is Succinate--CoA ligase [ADP-forming] subunit beta from Stutzerimonas stutzeri (strain A1501) (Pseudomonas stutzeri).